Here is a 571-residue protein sequence, read N- to C-terminus: Phosphoribosylaminoimidazole carboxylase (571 aa).

S37 bears the Phosphoserine mark. Residues 110-298 (KEHLIKNGIA…QFEAHLRSIL (189 aa)) form the ATP-grasp domain. 138–193 (GRDLGFPFVLKSRTLAYDGRGNFVVKNKEMIPEALEVLKDRPLYAEKWAPFTKELA) contacts ATP.

It in the C-terminal section; belongs to the AIR carboxylase family. Class I subfamily.

The enzyme catalyses 5-amino-1-(5-phospho-D-ribosyl)imidazole-4-carboxylate + H(+) = 5-amino-1-(5-phospho-beta-D-ribosyl)imidazole + CO2. It participates in purine metabolism; IMP biosynthesis via de novo pathway; 5-amino-1-(5-phospho-D-ribosyl)imidazole-4-carboxylate from 5-amino-1-(5-phospho-D-ribosyl)imidazole (carboxylase route): step 1/1. The chain is Phosphoribosylaminoimidazole carboxylase (ADE2) from Saccharomyces cerevisiae (strain ATCC 204508 / S288c) (Baker's yeast).